The primary structure comprises 431 residues: Pachytene checkpoint protein 2 homolog (431 aa).

At M1 the chain carries N-acetylmethionine. 179–186 (GPPGTGKT) contributes to the ATP binding site.

It belongs to the AAA ATPase family. PCH2 subfamily. As to quaternary structure, specifically interacts with the ligand binding domain of the thyroid receptor (TR). This interaction does not require the presence of thyroid hormone for its interaction. Interacts with proteasome subunit PSMA8; to participate in meiosis progression during spermatogenesis.

Plays a key role in chromosome recombination and chromosome structure development during meiosis. Required at early steps in meiotic recombination that leads to non-crossovers pathways. Also needed for efficient completion of homologous synapsis by influencing crossover distribution along the chromosomes affecting both crossovers and non-crossovers pathways. Also required for development of higher-order chromosome structures and is needed for synaptonemal-complex formation. In males, required for efficient synapsis of the sex chromosomes and for sex body formation. Promotes early steps of the DNA double-strand breaks (DSBs) repair process upstream of the assembly of RAD51 complexes. Required for depletion of HORMAD1 and HORMAD2 from synapsed chromosomes. Plays a role in mitotic spindle assembly checkpoint (SAC) activation. This chain is Pachytene checkpoint protein 2 homolog (TRIP13), found in Sus scrofa (Pig).